The primary structure comprises 134 residues: Fluoride-specific ion channel FluC 2 (134 aa).

4 consecutive transmembrane segments (helical) span residues 8–28 (IVAI…LNTW), 40–60 (IENI…LVIV), 69–89 (LGVG…DSVL), and 99–119 (LIYV…GYLL). G75 and T78 together coordinate Na(+).

This sequence belongs to the fluoride channel Fluc/FEX (TC 1.A.43) family.

The protein localises to the cell membrane. The catalysed reaction is fluoride(in) = fluoride(out). Na(+) is not transported, but it plays an essential structural role and its presence is essential for fluoride channel function. Its function is as follows. Fluoride-specific ion channel. Important for reducing fluoride concentration in the cell, thus reducing its toxicity. The sequence is that of Fluoride-specific ion channel FluC 2 from Halalkalibacterium halodurans (strain ATCC BAA-125 / DSM 18197 / FERM 7344 / JCM 9153 / C-125) (Bacillus halodurans).